Consider the following 203-residue polypeptide: Histidine biosynthesis bifunctional protein HisIE (203 aa).

Residues 1–114 (MLTEQQRREL…FGDASHQWLF (114 aa)) are phosphoribosyl-AMP cyclohydrolase. Residues 115–203 (LYQLEQLLAE…VIDNLRKRHQ (89 aa)) form a phosphoribosyl-ATP pyrophosphohydrolase region.

In the N-terminal section; belongs to the PRA-CH family. The protein in the C-terminal section; belongs to the PRA-PH family.

It localises to the cytoplasm. It catalyses the reaction 1-(5-phospho-beta-D-ribosyl)-ATP + H2O = 1-(5-phospho-beta-D-ribosyl)-5'-AMP + diphosphate + H(+). It carries out the reaction 1-(5-phospho-beta-D-ribosyl)-5'-AMP + H2O = 1-(5-phospho-beta-D-ribosyl)-5-[(5-phospho-beta-D-ribosylamino)methylideneamino]imidazole-4-carboxamide. Its pathway is amino-acid biosynthesis; L-histidine biosynthesis; L-histidine from 5-phospho-alpha-D-ribose 1-diphosphate: step 2/9. It participates in amino-acid biosynthesis; L-histidine biosynthesis; L-histidine from 5-phospho-alpha-D-ribose 1-diphosphate: step 3/9. The sequence is that of Histidine biosynthesis bifunctional protein HisIE (hisI) from Salmonella typhimurium (strain LT2 / SGSC1412 / ATCC 700720).